A 218-amino-acid chain; its full sequence is Ribosomal RNA small subunit methyltransferase G (218 aa).

Residues Gly-82, Leu-87, 133–134 (VE), and Arg-147 contribute to the S-adenosyl-L-methionine site.

It belongs to the methyltransferase superfamily. RNA methyltransferase RsmG family.

It is found in the cytoplasm. The catalysed reaction is guanosine(527) in 16S rRNA + S-adenosyl-L-methionine = N(7)-methylguanosine(527) in 16S rRNA + S-adenosyl-L-homocysteine. Specifically methylates the N7 position of guanine in position 527 of 16S rRNA. In Leptothrix cholodnii (strain ATCC 51168 / LMG 8142 / SP-6) (Leptothrix discophora (strain SP-6)), this protein is Ribosomal RNA small subunit methyltransferase G.